A 139-amino-acid polypeptide reads, in one-letter code: Large ribosomal subunit protein uL22 (139 aa).

The disordered stretch occupies residues 1–21; the sequence is MTAPTPEFRNKKQRKQQVKLR.

Belongs to the universal ribosomal protein uL22 family. Part of the 50S ribosomal subunit.

Functionally, this protein binds specifically to 23S rRNA; its binding is stimulated by other ribosomal proteins, e.g. L4, L17, and L20. It is important during the early stages of 50S assembly. It makes multiple contacts with different domains of the 23S rRNA in the assembled 50S subunit and ribosome. In terms of biological role, the globular domain of the protein is located near the polypeptide exit tunnel on the outside of the subunit, while an extended beta-hairpin is found that lines the wall of the exit tunnel in the center of the 70S ribosome. This is Large ribosomal subunit protein uL22 from Deinococcus deserti (strain DSM 17065 / CIP 109153 / LMG 22923 / VCD115).